The primary structure comprises 368 residues: Cytochrome b-c1 complex subunit 2, mitochondrial (368 aa).

Residues 1-16 (MLSAARLQFAQGSVRR) constitute a mitochondrion transit peptide. A phosphoserine mark is found at S141 and S168.

The protein belongs to the peptidase M16 family. UQCRC2/QCR2 subfamily. Component of the ubiquinol-cytochrome c oxidoreductase (cytochrome b-c1 complex, complex III, CIII), a multisubunit enzyme composed of 10 subunits. The complex is composed of 3 respiratory subunits cytochrome b (COB), cytochrome c1 (CYT1) and Rieske protein (RIP1), 2 core protein subunits COR1 and QCR2, and 5 low-molecular weight protein subunits QCR6, QCR7, QCR8, QCR9 and QCR10. The complex exists as an obligatory dimer and forms supercomplexes (SCs) in the inner mitochondrial membrane with a monomer or a dimer of cytochrome c oxidase (complex IV, CIV), resulting in 2 different assemblies (supercomplexes III(2)IV and III(2)IV(2)).

The protein localises to the mitochondrion inner membrane. In terms of biological role, component of the ubiquinol-cytochrome c oxidoreductase, a multisubunit transmembrane complex that is part of the mitochondrial electron transport chain which drives oxidative phosphorylation. The respiratory chain contains 3 multisubunit complexes succinate dehydrogenase (complex II, CII), ubiquinol-cytochrome c oxidoreductase (cytochrome b-c1 complex, complex III, CIII) and cytochrome c oxidase (complex IV, CIV), that cooperate to transfer electrons derived from NADH and succinate to molecular oxygen, creating an electrochemical gradient over the inner membrane that drives transmembrane transport and the ATP synthase. The cytochrome b-c1 complex catalyzes electron transfer from ubiquinol to cytochrome c, linking this redox reaction to translocation of protons across the mitochondrial inner membrane, with protons being carried across the membrane as hydrogens on the quinol. In the process called Q cycle, 2 protons are consumed from the matrix, 4 protons are released into the intermembrane space and 2 electrons are passed to cytochrome c. This chain is Cytochrome b-c1 complex subunit 2, mitochondrial (QCR2), found in Saccharomyces cerevisiae (strain ATCC 204508 / S288c) (Baker's yeast).